The primary structure comprises 164 residues: Photosystem II extrinsic protein V (164 aa).

Residues 1-27 (MALKSKFLVGSILATFILNGFSSPAQA) form the signal peptide. Cysteine 64, cysteine 67, histidine 68, and histidine 119 together coordinate heme c.

Belongs to the cytochrome c family. PsbV subfamily. PSII is composed of 1 copy each of membrane proteins PsbA, PsbB, PsbC, PsbD, PsbE, PsbF, PsbH, PsbI, PsbJ, PsbK, PsbL, PsbM, PsbT, PsbY, PsbZ, Psb30/Ycf12, at least 3 peripheral proteins of the oxygen-evolving complex and a large number of cofactors. It forms dimeric complexes. It depends on heme c as a cofactor.

Its subcellular location is the plastid. The protein resides in the chloroplast thylakoid membrane. Functionally, one of the extrinsic, lumenal subunits of photosystem II (PSII). PSII is a light-driven water plastoquinone oxidoreductase, using light energy to abstract electrons from H(2)O, generating a proton gradient subsequently used for ATP formation. The extrinsic proteins stabilize the structure of photosystem II oxygen-evolving complex (OEC), the ion environment of oxygen evolution and protect the OEC against heat-induced inactivation. The protein is Photosystem II extrinsic protein V of Emiliania huxleyi (Coccolithophore).